The chain runs to 256 residues: MDFEKAQNRIIEFIRNETDKAGVDGAVVGISGGIDSALTATLTVEALGKERVLGLHMPESSLTPAVDSEDAKILADWLGIEYRTIDISGIVSAFMASIPESESSDRLTRGNLKARTRMSLLYFHANRLNRMVVGTGNKTEILLGYYTKYGDGGVDLEPIGGIYKTEVWELSRRLGIPDPLITKKPSAGLWTGQTDEAELGISYLKVDDVLRMIEEGAEQEKILKDTGISIEQLNSVTRRIERNEHKRKSPPVPELY.

29–36 (GISGGIDS) serves as a coordination point for ATP. D35 is a binding site for Mg(2+). R115 is a binding site for deamido-NAD(+). Position 135 (T135) interacts with ATP. E140 contributes to the Mg(2+) binding site. Deamido-NAD(+) is bound by residues K148 and D155. Positions 164 and 186 each coordinate ATP. 245 to 246 (HK) serves as a coordination point for deamido-NAD(+).

The protein belongs to the NAD synthetase family. In terms of assembly, homodimer.

It carries out the reaction deamido-NAD(+) + NH4(+) + ATP = AMP + diphosphate + NAD(+) + H(+). The protein operates within cofactor biosynthesis; NAD(+) biosynthesis; NAD(+) from deamido-NAD(+) (ammonia route): step 1/1. Functionally, catalyzes the ATP-dependent amidation of deamido-NAD to form NAD. Uses ammonia as a nitrogen source. The chain is NH(3)-dependent NAD(+) synthetase from Methanosarcina acetivorans (strain ATCC 35395 / DSM 2834 / JCM 12185 / C2A).